We begin with the raw amino-acid sequence, 453 residues long: Tol-Pal system protein TolB (453 aa).

The signal sequence occupies residues Met1–Ala31.

This sequence belongs to the TolB family. In terms of assembly, the Tol-Pal system is composed of five core proteins: the inner membrane proteins TolA, TolQ and TolR, the periplasmic protein TolB and the outer membrane protein Pal. They form a network linking the inner and outer membranes and the peptidoglycan layer.

The protein localises to the periplasm. Its function is as follows. Part of the Tol-Pal system, which plays a role in outer membrane invagination during cell division and is important for maintaining outer membrane integrity. In Orientia tsutsugamushi (strain Ikeda) (Rickettsia tsutsugamushi), this protein is Tol-Pal system protein TolB.